Here is a 174-residue protein sequence, read N- to C-terminus: Flavodoxin 1 (174 aa).

The Flavodoxin-like domain maps to 4-168 (IGIFYGSSSG…RLERWIAVLQ (165 aa)). FMN contacts are provided by residues 10-14 (SSSGV) and 89-122 (LFGAGDYVSHGEQFVSALGVLYDKFKARGAALVG).

FMN serves as cofactor.

Flavodoxins are low-potential electron donors to a number of redox enzymes. AvFld 1 is able to donate electrons to the assimilatory nitrate reductase of A.vinelandii to catalyze the reduction of nitrate to nitrite. In Azotobacter vinelandii (strain DJ / ATCC BAA-1303), this protein is Flavodoxin 1.